The sequence spans 174 residues: Calcineurin subunit B (174 aa).

4 EF-hand domains span residues 21–56 (EEIE…SSNP), 60–88 (RLMD…FSGK), 90–125 (SKLD…MVGK), and 131–166 (ELQQ…KSVA). Ca(2+) contacts are provided by Asp34, Asp36, Ser38, Thr40, Glu45, Asp66, Asp68, Asn70, Thr72, Glu77, Asp103, Asp105, Asp107, Tyr109, Glu114, Asp144, Asp146, Asp148, Arg150, and Glu155.

The protein belongs to the calcineurin regulatory subunit family. In terms of assembly, composed of a catalytic subunit (A) and a regulatory subunit (B).

Its function is as follows. Regulatory subunit of calcineurin, a calcium-dependent, calmodulin stimulated protein phosphatase. Confers calcium sensitivity. The sequence is that of Calcineurin subunit B (CNB1) from Debaryomyces hansenii (strain ATCC 36239 / CBS 767 / BCRC 21394 / JCM 1990 / NBRC 0083 / IGC 2968) (Yeast).